The primary structure comprises 387 residues: Probable inactive shikimate kinase like 2, chloroplastic (387 aa).

The transit peptide at 1–71 directs the protein to the chloroplast; the sequence is MAAFASGLAI…FNSFSCNCLS (71 aa). The segment at 368–387 is disordered; the sequence is NIKPPGWDPSSDTGPHPQFT.

Belongs to the shikimate kinase family.

It localises to the plastid. The protein localises to the chloroplast. This Arabidopsis thaliana (Mouse-ear cress) protein is Probable inactive shikimate kinase like 2, chloroplastic (SKL2).